A 170-amino-acid chain; its full sequence is Bifunctional protein PyrR (170 aa).

A PRPP-binding motif is present at residues 90–102 (LVLIDDVLMSGRT).

The protein belongs to the purine/pyrimidine phosphoribosyltransferase family. PyrR subfamily.

It catalyses the reaction UMP + diphosphate = 5-phospho-alpha-D-ribose 1-diphosphate + uracil. Its function is as follows. Regulates the transcription of the pyrimidine nucleotide (pyr) operon in response to exogenous pyrimidines. In terms of biological role, also displays a weak uracil phosphoribosyltransferase activity which is not physiologically significant. This chain is Bifunctional protein PyrR, found in Pseudomonas syringae pv. tomato (strain ATCC BAA-871 / DC3000).